The following is a 775-amino-acid chain: Ankyrin repeat and EF-hand domain-containing protein 1 (775 aa).

ANK repeat units follow at residues 47-76, 184-213, 217-246, 250-279, 524-553, 557-586, 590-619, and 623-652; these read DGLS…HPDV, TGRT…EVNA, DRHH…DMGL, DGNT…DLKW, TYKT…NVNA, FLWT…SIDA, NNST…KFQI, and KGHA…NLPK.

This chain is Ankyrin repeat and EF-hand domain-containing protein 1 (Ankef1), found in Mus musculus (Mouse).